The chain runs to 365 residues: MAEKEVPLTAVKVEALVVMKIIKHCSQTFPTTATGSIVGMDAEGTLEITNSFPFPVVEMPAESHFDNTAPNPAAAAPRAKANTVYQAEMIRMLREVNVDANNVGWYTSANMGNFVNMNVIENQYFYQKEMNERTVALVHDVSRSAQGSLSLRAFRLSPKFMAAFKENKFTAEELQKSGLRYQDIFVELPVEIHNSHLITTFLHQLQCPRQSAPTDLPPSLAALESGPFVKDTILAPNYDNLSLSIDPFLEKNCDLLLDSIETHNTETNNFQYYQRSFTREQTKINQWIAKRKAENASRATLKQPPLPEDEWQRLFKLPQEPSRLESMLNSRQVEQYARQVDSFVSATTGKMFAVKGNLLPGETAK.

Residues valine 11 to phenylalanine 160 enclose the MPN domain.

It belongs to the eIF-3 subunit H family. Component of the eukaryotic translation initiation factor 3 (eIF-3) complex.

Its subcellular location is the cytoplasm. Functionally, component of the eukaryotic translation initiation factor 3 (eIF-3) complex, which is involved in protein synthesis of a specialized repertoire of mRNAs and, together with other initiation factors, stimulates binding of mRNA and methionyl-tRNAi to the 40S ribosome. The eIF-3 complex specifically targets and initiates translation of a subset of mRNAs involved in cell proliferation. The chain is Eukaryotic translation initiation factor 3 subunit H from Aspergillus terreus (strain NIH 2624 / FGSC A1156).